The primary structure comprises 203 residues: uncharacterized protein (203 aa).

The next 3 membrane-spanning stretches (helical) occupy residues 60–80 (IIDMILGAVTISLVIIVFFLY), 114–134 (WFQLKYLLLVSMTAFSFYFCT), and 157–177 (LQLGWICTTALLFYFYDALIL). 192–199 (GAMSEGKT) is a binding site for ATP.

The protein resides in the membrane. This is an uncharacterized protein from Saccharomyces cerevisiae (strain ATCC 204508 / S288c) (Baker's yeast).